A 185-amino-acid chain; its full sequence is Ribosome-recycling factor (185 aa).

Belongs to the RRF family.

It localises to the cytoplasm. Functionally, responsible for the release of ribosomes from messenger RNA at the termination of protein biosynthesis. May increase the efficiency of translation by recycling ribosomes from one round of translation to another. The sequence is that of Ribosome-recycling factor from Treponema denticola (strain ATCC 35405 / DSM 14222 / CIP 103919 / JCM 8153 / KCTC 15104).